Here is a 337-residue protein sequence, read N- to C-terminus: Glyceraldehyde-3-phosphate dehydrogenase (337 aa).

Residues 13–14, D35, and R80 each bind NAD(+); that span reads RI. D-glyceraldehyde 3-phosphate-binding positions include 150–152, T181, 210–211, and R233; these read SCT and TG. Residue C151 is the Nucleophile of the active site. N315 contacts NAD(+).

It belongs to the glyceraldehyde-3-phosphate dehydrogenase family. In terms of assembly, homotetramer.

Its subcellular location is the cytoplasm. The catalysed reaction is D-glyceraldehyde 3-phosphate + phosphate + NAD(+) = (2R)-3-phospho-glyceroyl phosphate + NADH + H(+). It functions in the pathway carbohydrate degradation; glycolysis; pyruvate from D-glyceraldehyde 3-phosphate: step 1/5. In Colletotrichum lindemuthianum (Bean anthracnose fungus), this protein is Glyceraldehyde-3-phosphate dehydrogenase (GPDA).